The sequence spans 171 residues: Peptide deformylase 1 (171 aa).

2 residues coordinate Fe cation: cysteine 99 and histidine 141. The active site involves glutamate 142.

The protein belongs to the polypeptide deformylase family. The cofactor is Fe(2+).

It catalyses the reaction N-terminal N-formyl-L-methionyl-[peptide] + H2O = N-terminal L-methionyl-[peptide] + formate. Its function is as follows. Removes the formyl group from the N-terminal Met of newly synthesized proteins. Requires at least a dipeptide for an efficient rate of reaction. N-terminal L-methionine is a prerequisite for activity but the enzyme has broad specificity at other positions. This is Peptide deformylase 1 from Xanthomonas axonopodis pv. citri (strain 306).